Reading from the N-terminus, the 185-residue chain is Ribosome-recycling factor (185 aa).

It belongs to the RRF family.

The protein localises to the cytoplasm. In terms of biological role, responsible for the release of ribosomes from messenger RNA at the termination of protein biosynthesis. May increase the efficiency of translation by recycling ribosomes from one round of translation to another. This is Ribosome-recycling factor from Shewanella baltica (strain OS223).